Consider the following 210-residue polypeptide: Mitochondrial coenzyme A diphosphatase NUDT8 (210 aa).

A Nudix hydrolase domain is found at 25 to 172 (LRSRPAAAAV…HFSYTLPVFL (148 aa)). The residue at position 70 (lysine 70) is an N6-succinyllysine. The Nudix box motif lies at 70 to 91 (KCDPDDQDVIHTALRETQEELG). Glutamate 85 and glutamate 89 together coordinate Mg(2+). Residue lysine 96 is modified to N6-succinyllysine.

The protein belongs to the Nudix hydrolase family. In terms of assembly, monomer. The cofactor is Mg(2+). Mn(2+) serves as cofactor. In terms of tissue distribution, expressed at the highest levels in the kidneys, heart, brown adipose tissue and liver (at protein level). Expressed at lower levels in the brain, skeletal muscle, and white adipose tissue (at protein level).

The protein localises to the mitochondrion. The catalysed reaction is an acyl-CoA + H2O = an acyl-4'-phosphopantetheine + adenosine 3',5'-bisphosphate + 2 H(+). The enzyme catalyses CoA + H2O = (R)-4'-phosphopantetheine + adenosine 3',5'-bisphosphate + 2 H(+). It catalyses the reaction acetyl-CoA + H2O = S-acetyl-4'-phosphopantetheine + adenosine 3',5'-bisphosphate + 2 H(+). It carries out the reaction butanoyl-CoA + H2O = S-butanoyl-4'-phosphopantetheine + adenosine 3',5'-bisphosphate + 2 H(+). The catalysed reaction is hexanoyl-CoA + H2O = hexanoyl-4'-phosphopantetheine + adenosine 3',5'-bisphosphate + 2 H(+). The enzyme catalyses octanoyl-CoA + H2O = S-octanoyl-4'-phosphopantetheine + adenosine 3',5'-bisphosphate + 2 H(+). It catalyses the reaction propanoyl-CoA + H2O = propanoyl-4'-phosphopantetheine + adenosine 3',5'-bisphosphate + 2 H(+). It carries out the reaction malonyl-CoA + H2O = malonyl-4'-phosphopantetheine + adenosine 3',5'-bisphosphate + 2 H(+). The catalysed reaction is succinyl-CoA + H2O = succinyl-4'-phosphopantetheine + adenosine 3',5'-bisphosphate + 2 H(+). The enzyme catalyses a 5'-end CoA-ribonucleoside in mRNA + H2O = a 5'-end phospho-adenosine-phospho-ribonucleoside in mRNA + (R)-4'-phosphopantetheine + 2 H(+). Acyl-CoA diphosphatase that mediates the hydrolysis of a wide range of CoA and CoA esters yielding 3',5'-ADP and the corresponding 4'-phosphopantetheine derivative as products. Hydrolyzes short- and medium-chain acyl-CoAs, exhibiting the highest activity toward free CoA, hexanoyl-CoA, and octanoyl-CoA and the lowest activity against acetyl-CoA. Exhibits decapping activity towards dpCoA-capped RNAs in vitro. The protein is Mitochondrial coenzyme A diphosphatase NUDT8 (Nudt8) of Mus musculus (Mouse).